We begin with the raw amino-acid sequence, 158 residues long: NADH-quinone oxidoreductase subunit B (158 aa).

4 residues coordinate [4Fe-4S] cluster: C37, C38, C102, and C132.

The protein belongs to the complex I 20 kDa subunit family. In terms of assembly, NDH-1 is composed of 14 different subunits. Subunits NuoB, C, D, E, F, and G constitute the peripheral sector of the complex. It depends on [4Fe-4S] cluster as a cofactor.

The protein localises to the cell inner membrane. It carries out the reaction a quinone + NADH + 5 H(+)(in) = a quinol + NAD(+) + 4 H(+)(out). Functionally, NDH-1 shuttles electrons from NADH, via FMN and iron-sulfur (Fe-S) centers, to quinones in the respiratory chain. The immediate electron acceptor for the enzyme in this species is believed to be ubiquinone. Couples the redox reaction to proton translocation (for every two electrons transferred, four hydrogen ions are translocated across the cytoplasmic membrane), and thus conserves the redox energy in a proton gradient. This is NADH-quinone oxidoreductase subunit B from Thioalkalivibrio sulfidiphilus (strain HL-EbGR7).